A 359-amino-acid chain; its full sequence is MKKYNFNPGPSILPQETVNNTARAITNFSNSGLSLMEISHRSKDFQLMINETIVLFKELLSIPEGYSVLFLGGGASLQFCMVPYNLLETKAAYLNSGAWASKAIKEARLFGEIIEVASSREANFSYIPKNYIVPSDSDYFHITTNNTIFGTEIHHDIESSVPLVADMSSDIFSRPINISKYGLIYGGAQKNLGPAGVTFVIVKDSLLGNVSRPIPSMLDYRIHIKNESMFNTPPVVPIYASLQTLKWLKTLGGVEEVYKKNKEKATFLYEEIDRNRLFKGIAATEDRSLMNVCFIMNDEYKNLESAFQQFASSKGMVGIKGHRSVGGFRASIYNALPKESIKALVSVMREFEKIHCKGI.

Arginine 41 contacts L-glutamate. Pyridoxal 5'-phosphate is bound by residues 75–76 (AS), tryptophan 99, threonine 147, aspartate 166, and glutamine 189. An N6-(pyridoxal phosphate)lysine modification is found at lysine 190. Position 231–232 (231–232 (NT)) interacts with pyridoxal 5'-phosphate.

This sequence belongs to the class-V pyridoxal-phosphate-dependent aminotransferase family. SerC subfamily. Homodimer. Pyridoxal 5'-phosphate serves as cofactor.

It localises to the cytoplasm. The catalysed reaction is O-phospho-L-serine + 2-oxoglutarate = 3-phosphooxypyruvate + L-glutamate. It carries out the reaction 4-(phosphooxy)-L-threonine + 2-oxoglutarate = (R)-3-hydroxy-2-oxo-4-phosphooxybutanoate + L-glutamate. It functions in the pathway amino-acid biosynthesis; L-serine biosynthesis; L-serine from 3-phospho-D-glycerate: step 2/3. The protein operates within cofactor biosynthesis; pyridoxine 5'-phosphate biosynthesis; pyridoxine 5'-phosphate from D-erythrose 4-phosphate: step 3/5. Catalyzes the reversible conversion of 3-phosphohydroxypyruvate to phosphoserine and of 3-hydroxy-2-oxo-4-phosphonooxybutanoate to phosphohydroxythreonine. The polypeptide is Phosphoserine aminotransferase (Azobacteroides pseudotrichonymphae genomovar. CFP2).